A 210-amino-acid polypeptide reads, in one-letter code: Probable GTP-binding protein EngB (210 aa).

Residues 22–198 (FLPEYAFIGR…LTYIDEVNQE (177 aa)) form the EngB-type G domain. GTP-binding positions include 30 to 37 (GRSNVGKS), 57 to 61 (GKTQL), 75 to 78 (DLPG), 142 to 145 (TKAD), and 177 to 179 (TSS). Positions 37 and 59 each coordinate Mg(2+).

It belongs to the TRAFAC class TrmE-Era-EngA-EngB-Septin-like GTPase superfamily. EngB GTPase family. Mg(2+) serves as cofactor.

Necessary for normal cell division and for the maintenance of normal septation. The sequence is that of Probable GTP-binding protein EngB from Flavobacterium johnsoniae (strain ATCC 17061 / DSM 2064 / JCM 8514 / BCRC 14874 / CCUG 350202 / NBRC 14942 / NCIMB 11054 / UW101) (Cytophaga johnsonae).